We begin with the raw amino-acid sequence, 305 residues long: Ribonucleoside-diphosphate reductase small subunit (305 aa).

Residues Glu-64, Glu-94, and His-97 each coordinate Fe cation. Residue Tyr-101 is part of the active site. A helical transmembrane segment spans residues Val-150–Leu-170. Fe cation-binding residues include Glu-157, Glu-191, and His-194.

It belongs to the ribonucleoside diphosphate reductase small chain family. In terms of assembly, heterotetramer composed of a homodimer of the large subunit (R1) and a homodimer of the small subunit (R2). Larger multisubunit protein complex are also active, composed of (R1)n(R2)n. It depends on Fe cation as a cofactor.

Its subcellular location is the host membrane. It catalyses the reaction a 2'-deoxyribonucleoside 5'-diphosphate + [thioredoxin]-disulfide + H2O = a ribonucleoside 5'-diphosphate + [thioredoxin]-dithiol. Ribonucleoside-diphosphate reductase holoenzyme provides the precursors necessary for viral DNA synthesis. Allows virus growth in non-dividing cells, as well as reactivation from latency in infected hosts. Catalyzes the biosynthesis of deoxyribonucleotides from the corresponding ribonucleotides. This Alcelaphine herpesvirus 1 (strain C500) (AlHV-1) protein is Ribonucleoside-diphosphate reductase small subunit.